Reading from the N-terminus, the 283-residue chain is Pseudokinase OPG198 (283 aa).

ATP-binding residues include M1 and K30. The region spanning 1-283 (MESFKYCFDN…DRLRRLFIQD (283 aa)) is the Protein kinase domain.

The protein belongs to the protein kinase superfamily. Ser/Thr protein kinase family. Poxviruses subfamily. Interacts with B1/VPK1. Interacts with host VRK1. Interacts with host VRK2.

It localises to the host nucleus. Its activity is regulated as follows. Both catalytically active kinases B1/VPK1 and host VRK2 repress B12 inhibitory activity in a B1/VPK1 deletion mutant strain. Pseudokinase that plays a role in viral DNA replication repression by activating the antiviral protein BANF1 and inhibiting the activity of host VRK1, a cellular modulator of BANF1. The protein is Pseudokinase OPG198 (OPG198) of Homo sapiens (Human).